Consider the following 154-residue polypeptide: Superoxide dismutase [Cu-Zn] (154 aa).

The Cu cation site is built by His-47, His-49, and His-64. A disulfide bridge connects residues Cys-58 and Cys-147. The Zn(2+) site is built by His-64, His-72, His-81, and Asp-84. His-121 serves as a coordination point for Cu cation. Arg-144 contacts substrate.

This sequence belongs to the Cu-Zn superoxide dismutase family. As to quaternary structure, homodimer. The cofactor is Cu cation. Zn(2+) serves as cofactor.

It localises to the cytoplasm. The protein localises to the mitochondrion. Its subcellular location is the cell membrane. The catalysed reaction is 2 superoxide + 2 H(+) = H2O2 + O2. Destroys radicals which are normally produced within the cells and which are toxic to biological systems. Destroys radicals produced by host defense mechanisms. The sequence is that of Superoxide dismutase [Cu-Zn] from Cryptococcus neoformans var. grubii serotype A (strain H99 / ATCC 208821 / CBS 10515 / FGSC 9487) (Filobasidiella neoformans var. grubii).